The following is a 119-amino-acid chain: Autophagy-related protein 8A (119 aa).

Residue Gly-117 is the site of Phosphatidylethanolamine amidated glycine attachment. Residues 118-119 (SA) constitute a propeptide, removed in mature form.

It belongs to the ATG8 family. As to quaternary structure, interacts with ATG4. In terms of processing, the C-terminal 2 residues are removed by ATG4 to expose Gly-117 at the C-terminus. The C-terminal Gly is then amidated with phosphatidylethanolamine by an activating system similar to that for ubiquitin. Constitutively expressed.

Its subcellular location is the cytoplasmic vesicle. The protein localises to the autophagosome membrane. It localises to the vacuole membrane. It is found in the cytoplasm. The protein resides in the cytoskeleton. Its function is as follows. Ubiquitin-like modifier involved in cytoplasm to vacuole transport (Cvt) vesicles and autophagosomes formation. May mediate the delivery of the vesicles and autophagosomes to the vacuole via the microtubule cytoskeleton. In terms of biological role, ubiquitin-like modifier involved in autophagosomes formation. May mediate the delivery of the autophagosomes to the vacuole via the microtubule cytoskeleton. This is Autophagy-related protein 8A (ATG8A) from Oryza sativa subsp. indica (Rice).